We begin with the raw amino-acid sequence, 140 residues long: Putative pre-16S rRNA nuclease (140 aa).

The protein belongs to the YqgF nuclease family.

It is found in the cytoplasm. Functionally, could be a nuclease involved in processing of the 5'-end of pre-16S rRNA. The chain is Putative pre-16S rRNA nuclease from Vibrio cholerae serotype O1 (strain ATCC 39541 / Classical Ogawa 395 / O395).